The primary structure comprises 711 residues: Quinolinate synthase, chloroplastic (711 aa).

The transit peptide at 1 to 41 (MDVSSLAAAAPSLVAPPLHHKPHLAFPPHHPSPARGSIGVR) directs the protein to the chloroplast. The tract at residues 17-63 (PLHHKPHLAFPPHHPSPARGSIGVRCAHSPSPHPLRPSAATADEEVS) is disordered. The active-site Cysteine persulfide intermediate is the Cys-114. His-263 and Ser-289 together coordinate iminosuccinate. [4Fe-4S] cluster is bound at residue Cys-343. Iminosuccinate is bound by residues 372-374 (YIN) and Ser-394. Cys-467 serves as a coordination point for [4Fe-4S] cluster. Iminosuccinate-binding positions include 493–495 (HFE) and Thr-518. A [4Fe-4S] cluster-binding site is contributed by Cys-631.

This sequence belongs to the quinolinate synthase family. Type 1 subfamily. As to quaternary structure, homodimer. Requires [4Fe-4S] cluster as cofactor.

It localises to the plastid. The protein localises to the chloroplast. It catalyses the reaction iminosuccinate + dihydroxyacetone phosphate = quinolinate + phosphate + 2 H2O + H(+). The protein operates within cofactor biosynthesis; NAD(+) biosynthesis; quinolinate from iminoaspartate: step 1/1. Catalyzes the condensation of iminoaspartate with dihydroxyacetone phosphate to form quinolinate. This is Quinolinate synthase, chloroplastic from Oryza sativa subsp. japonica (Rice).